A 219-amino-acid chain; its full sequence is Uracil-DNA glycosylase (219 aa).

Aspartate 59 serves as the catalytic Proton acceptor.

Belongs to the uracil-DNA glycosylase (UDG) superfamily. UNG family.

The protein localises to the cytoplasm. The catalysed reaction is Hydrolyzes single-stranded DNA or mismatched double-stranded DNA and polynucleotides, releasing free uracil.. Functionally, excises uracil residues from the DNA which can arise as a result of misincorporation of dUMP residues by DNA polymerase or due to deamination of cytosine. The polypeptide is Uracil-DNA glycosylase (Staphylococcus haemolyticus (strain JCSC1435)).